We begin with the raw amino-acid sequence, 61 residues long: Phospholipase A2 (61 aa).

Ca(2+) contacts are provided by Y27, G29, and G31. C28 and C35 are disulfide-bonded. H38 is an active-site residue. D39 is a binding site for Ca(2+). C41 and C59 are joined by a disulfide. Residue D60 is part of the active site.

It belongs to the phospholipase A2 family. Group II subfamily. D49 sub-subfamily. In terms of assembly, homodimer. Ca(2+) is required as a cofactor. Expressed by the venom gland.

It localises to the secreted. It carries out the reaction a 1,2-diacyl-sn-glycero-3-phosphocholine + H2O = a 1-acyl-sn-glycero-3-phosphocholine + a fatty acid + H(+). In terms of biological role, snake venom phospholipase A2 (PLA2) that displays edema-inducing activities. PLA2 catalyzes the calcium-dependent hydrolysis of the 2-acyl groups in 3-sn-phosphoglycerides. The polypeptide is Phospholipase A2 (Crotalus atrox (Western diamondback rattlesnake)).